A 33-amino-acid chain; its full sequence is Brevinin-2E (33 aa).

Residues Cys27 and Cys33 are joined by a disulfide bond.

The protein belongs to the frog skin active peptide (FSAP) family. Brevinin subfamily. Expressed by the skin glands.

Its subcellular location is the secreted. Shows antibacterial activity against representative Gram-negative and Gram-positive bacterial species, and hemolytic activity. This Pelophylax lessonae (Pool frog) protein is Brevinin-2E.